A 361-amino-acid chain; its full sequence is Phosphoserine aminotransferase (361 aa).

An L-glutamate-binding site is contributed by Arg42. Pyridoxal 5'-phosphate is bound by residues 76–77 (AT), Trp102, Thr152, Asp172, and Gln195. An N6-(pyridoxal phosphate)lysine modification is found at Lys196. 237–238 (NT) contacts pyridoxal 5'-phosphate.

It belongs to the class-V pyridoxal-phosphate-dependent aminotransferase family. SerC subfamily. Homodimer. It depends on pyridoxal 5'-phosphate as a cofactor.

It localises to the cytoplasm. It catalyses the reaction O-phospho-L-serine + 2-oxoglutarate = 3-phosphooxypyruvate + L-glutamate. It carries out the reaction 4-(phosphooxy)-L-threonine + 2-oxoglutarate = (R)-3-hydroxy-2-oxo-4-phosphooxybutanoate + L-glutamate. Its pathway is amino-acid biosynthesis; L-serine biosynthesis; L-serine from 3-phospho-D-glycerate: step 2/3. The protein operates within cofactor biosynthesis; pyridoxine 5'-phosphate biosynthesis; pyridoxine 5'-phosphate from D-erythrose 4-phosphate: step 3/5. Functionally, catalyzes the reversible conversion of 3-phosphohydroxypyruvate to phosphoserine and of 3-hydroxy-2-oxo-4-phosphonooxybutanoate to phosphohydroxythreonine. The sequence is that of Phosphoserine aminotransferase from Xanthomonas campestris pv. campestris (strain B100).